We begin with the raw amino-acid sequence, 360 residues long: MSNLENLQTQILADIAASSDEAALEAVRVGALGKKGSISALLATLGKMDPEQRKTEGAAINLAKEAVTQALTARRDLLKAAALDAKLAAETIDVTLPLREPLAEQGRIHPLSQVWDELTAIFADMGFAIAEGPDIETDDNNFTRLNFPEGHPAREMHDTFYFNPKEDGSRLLLRTHTSPVQVRTMLSQRPPIRVICPGRTYRSDSDQTHTPMFHQVEGLVIDKGSHLGHLKWILAEFCKAFFEVDNVNMRFRPSFFPFTEPSLEVDIQCRRGNGEIRFGEGEDWLEILGCGMVHPNVLTACGIDPEVYQGFAWGMGIDRIAMLKYGMADLRQLFEADSRWLNHYGFKPLDIPSLAGGLSS.

Residue glutamate 260 coordinates Mg(2+).

Belongs to the class-II aminoacyl-tRNA synthetase family. Phe-tRNA synthetase alpha subunit type 1 subfamily. As to quaternary structure, tetramer of two alpha and two beta subunits. The cofactor is Mg(2+).

The protein resides in the cytoplasm. The enzyme catalyses tRNA(Phe) + L-phenylalanine + ATP = L-phenylalanyl-tRNA(Phe) + AMP + diphosphate + H(+). In Rhodopseudomonas palustris (strain BisB5), this protein is Phenylalanine--tRNA ligase alpha subunit.